We begin with the raw amino-acid sequence, 191 residues long: Protein adenylyltransferase NmFic (191 aa).

One can recognise a Fido domain in the interval glycine 37–lysine 162. ATP is bound by residues lysine 67, asparagine 104–histidine 107, glycine 112–arginine 118, and lysine 140–tyrosine 143. Positions serine 182–glycine 187 match the Inhibitory (S/T)XXXE(G/N) motif motif. Tyrosine 183 carries the O-AMP-tyrosine; in vitro modification. Glutamate 186 provides a ligand contact to ATP.

Homodimer. Post-translationally, auto-AMPylation at Tyr-183 in vitro.

It carries out the reaction L-tyrosyl-[protein] + ATP = O-(5'-adenylyl)-L-tyrosyl-[protein] + diphosphate. The enzyme catalyses L-threonyl-[protein] + ATP = 3-O-(5'-adenylyl)-L-threonyl-[protein] + diphosphate. With respect to regulation, adenylyltransferase activity is inhibited by the inhibitory helix present at the C-terminus: Glu-186 binds ATP and competes with ATP-binding at Arg-118, thereby preventing adenylyltransferase activity. Activation dissociates ATP-binding from Glu-186, allowing ordered binding of the entire ATP moiety with the alpha-phosphate in an orientation that is productive for accepting an incoming target hydroxyl side chain. In terms of biological role, adenylyltransferase that mediates the addition of adenosine 5'-monophosphate (AMP) to specific residues of target proteins. In Neisseria meningitidis serogroup B (strain ATCC BAA-335 / MC58), this protein is Protein adenylyltransferase NmFic.